The chain runs to 121 residues: MAKKKKINVSSGIIHVSCSPNNTIVSASDPGGNVLCWASSGTMGFKGSRKKTPYSAGIAADKVAKTVKEMGMATVKLFVKGTGRGKDTAIRSFANAGLSITEINEKTPIPHNGCKPPKRPR.

It belongs to the universal ribosomal protein uS11 family. As to quaternary structure, part of the 30S ribosomal subunit. Interacts with proteins S7 and S18. Binds to IF-3.

Located on the platform of the 30S subunit, it bridges several disparate RNA helices of the 16S rRNA. Forms part of the Shine-Dalgarno cleft in the 70S ribosome. This Mycoplasma pneumoniae (strain ATCC 29342 / M129 / Subtype 1) (Mycoplasmoides pneumoniae) protein is Small ribosomal subunit protein uS11.